The primary structure comprises 3414 residues: Genome polyprotein (3414 aa).

The disordered stretch occupies residues 1 to 27; the sequence is MAGKAILKGKGGGPPRRVSKETAKKTR. Over 1-98 the chain is Cytoplasmic; it reads MAGKAILKGK…LQKRGKRRST (98 aa). A propeptide spans 98 to 116 (ER anchor for the capsid protein C, removed in mature form by serine protease NS3); the sequence is TTDWTGWLLVAMLLSIALA. The chain crosses the membrane as a helical span at residues 99-119; sequence TDWTGWLLVAMLLSIALAATV. Residues 120 to 242 lie on the Extracellular side of the membrane; it reads RKEGDGTTVI…HLTRVEGWVW (123 aa). A glycan (N-linked (GlcNAc...) asparagine; by host) is linked at Asn-144. A helical membrane pass occupies residues 243 to 260; it reads KNKSLTLAVVVIVWMTVE. Ser-261 is a topological domain (cytoplasmic). A helical membrane pass occupies residues 262 to 280; the sequence is AVTRIVIVSALLCLAPAYA. At 281 to 727 the chain is on the extracellular side; that stretch reads SRCTHLENRD…HTVLGGAFNS (447 aa). 6 cysteine pairs are disulfide-bonded: Cys-283-Cys-310, Cys-340-Cys-396, Cys-340-Cys-401, Cys-354-Cys-385, Cys-372-Cys-396, and Cys-372-Cys-401. Residues 378-391 are fusion peptide; the sequence is DRGWGNHCGLFGKG. Asn-434 carries N-linked (GlcNAc...) asparagine; by host glycosylation. 2 disulfide bridges follow: Cys-466–Cys-570 and Cys-587–Cys-618. The helical transmembrane segment at 728–748 threads the bilayer; it reads VFGGVGFLPRILLGISLAWLG. Over 749-755 the chain is Cytoplasmic; it reads LNMRNPT. The helical transmembrane segment at 756-776 threads the bilayer; the sequence is MSMSFLLAGGLVLTMTLGVGA. Topologically, residues 777–1132 are extracellular; it reads DVGCAVDTER…RSMVVADNGE (356 aa). Disulfide bonds link Cys-780–Cys-791, Cys-831–Cys-920, Cys-955–Cys-1000, Cys-1057–Cys-1106, Cys-1068–Cys-1090, and Cys-1089–Cys-1093. 3 N-linked (GlcNAc...) asparagine; by host glycosylation sites follow: Asn-861, Asn-983, and Asn-999. Residues 1133 to 1153 traverse the membrane as a helical segment; that stretch reads LLSEGGIPGIVAVFVVLEYII. The Cytoplasmic segment spans residues 1154–1158; sequence RKRPS. A helical transmembrane segment spans residues 1159 to 1179; that stretch reads AGLTVVWGGVVVLALLVTGMV. Over 1180 to 1187 the chain is Lumenal; the sequence is TLQSMLRY. The helical transmembrane segment at 1188–1208 threads the bilayer; it reads VIAVGVTFHLELGPEIVALML. The Cytoplasmic portion of the chain corresponds to 1209-1236; the sequence is LQAVFELRVGLLGAFVLRRSLTTREVVT. Residues 1237–1257 traverse the membrane as a helical segment; it reads IYFLLLVLELGLPSANLEALW. Residues 1258 to 1293 are Lumenal-facing; sequence GWADALAMGAMIFRACTAEGKTGLGLLLVALMTQQN. Residues 1294–1314 traverse the membrane as a helical segment; it reads AVIVHQGLVIFLSVASACSVW. Topologically, residues 1315-1363 are cytoplasmic; that stretch reads KLLRGQREQKGLSWIVPLAGRLGGKGSGIRLLAFWELASRRDRRSFSEP. The helical transmembrane segment at 1364–1381 threads the bilayer; sequence LTVVGVMLTLASGMMRHT. Ser-1382 is a topological domain (lumenal). A helical transmembrane segment spans residues 1383–1403; that stretch reads QEALCALAAASFLLLMLVLGT. Residues 1404-1454 lie on the Cytoplasmic side of the membrane; that stretch reads RKMQLVAEWSGCVEWHPDLADEGGEISLRVRQDALGNFHLTELEKEERMMA. Residues 1410–1449 are interacts with and activates NS3 protease; the sequence is AEWSGCVEWHPDLADEGGEISLRVRQDALGNFHLTELEKE. The helical intramembrane region spans 1455–1475; sequence FWLLAGLTASALHWTGILVVM. Topologically, residues 1476–2160 are cytoplasmic; it reads GLWTMSEMLR…KMAERDAPEA (685 aa). The 180-residue stretch at 1490–1669 folds into the Peptidase S7 domain; the sequence is SDLVFSGQSG…EVEKSRPNLP (180 aa). Active-site charge relay system; for serine protease NS3 activity residues include His-1543, Asp-1567, and Ser-1627. Positions 1675–1831 constitute a Helicase ATP-binding domain; sequence TGWTSKGTIT…ESNGAITSEE (157 aa). 1688–1695 contacts ATP; that stretch reads MHPGSGKT. The DEAH box motif lies at 1779–1782; that stretch reads DEAH. In terms of domain architecture, Helicase C-terminal spans 1841–2000; sequence DGFDWITEYE…TLRGPVATFY (160 aa). Lys-1883 bears the N6-acetyllysine; by host mark. A helical transmembrane segment spans residues 2161 to 2181; the sequence is FLTMVEMVVLGLATLGAVWCL. Over 2182–2189 the chain is Lumenal; that stretch reads VLRTSISR. Residues 2190–2210 constitute an intramembrane region (helical); it reads MMLGTMVLLVSLALLWAGGVG. Tyr-2211 is a topological domain (lumenal). A helical membrane pass occupies residues 2212 to 2232; it reads GSMAGVALVFYTLLTVLQPEA. Residues 2233-2244 lie on the Cytoplasmic side of the membrane; that stretch reads GKQRSSDDNKLA. A helical transmembrane segment spans residues 2245 to 2265; the sequence is YFLLTLCSLAGLVAANEMGFL. At 2266 to 2299 the chain is on the lumenal side; the sequence is EKTKADLSAVLWSEREEPRVWSEWTNIDIQPAKS. The helical intramembrane region spans 2300–2320; that stretch reads WGTYVLVVSLFTPYIIHQLQT. The Lumenal portion of the chain corresponds to 2321 to 2343; that stretch reads RIQQLVNSAVASGAQAMRDLGGG. Positions 2344-2364 form an intramembrane region, helical; it reads TPFFGVAGHVLTLGVVSLVGA. Residues 2365–2368 lie on the Lumenal side of the membrane; that stretch reads TPTS. Residues 2369-2389 traverse the membrane as a helical segment; the sequence is LVVGVGLAAFHLAIVVSGLEA. The Cytoplasmic segment spans residues 2390-2432; it reads ELTQRAHKVFFSAMVRNPMVDGDVINPFGDGEVKPALYERKMS. Residues 2433–2453 traverse the membrane as a helical segment; it reads LILAMILCFMSVVLNRTVPAV. Over 2454-2477 the chain is Lumenal; sequence TEASAVGLAAAGQLIRPEADTLWT. Residues 2478–2498 form a helical membrane-spanning segment; that stretch reads MPVACGLSGVVRGSLWGFLPL. The Cytoplasmic portion of the chain corresponds to 2499 to 3414; the sequence is GHRLWLRTSG…WELKVESSII (916 aa). Positions 2512–2776 constitute an mRNA cap 0-1 NS5-type MT domain; it reads GGSEGDTLGD…EMDLGVGTRC (265 aa). Ser-2567 contributes to the S-adenosyl-L-methionine binding site. Residue Ser-2567 is modified to Phosphoserine. Residue Lys-2572 is the For 2'-O-MTase activity of the active site. S-adenosyl-L-methionine contacts are provided by Gly-2597, Trp-2598, Thr-2615, Ile-2616, and Val-2643. Residue Asp-2657 is the For 2'-O-MTase activity of the active site. Ile-2658 lines the S-adenosyl-L-methionine pocket. Active-site for 2'-O-MTase activity residues include Lys-2694 and Glu-2730. The segment at 2730-2734 is interaction with host SCRIB; it reads EMYYS. Tyr-2732 serves as a coordination point for S-adenosyl-L-methionine. Zn(2+) is bound by residues Glu-2950, His-2954, Cys-2959, and Cys-2962. In terms of domain architecture, RdRp catalytic spans 3040–3189; the sequence is GLFYADDTAG…RPIDDRFSKA (150 aa). Zn(2+)-binding residues include His-3224, Cys-3240, and Cys-3359.

It in the N-terminal section; belongs to the class I-like SAM-binding methyltransferase superfamily. mRNA cap 0-1 NS5-type methyltransferase family. Homodimer. In terms of assembly, forms heterodimers with envelope protein E in the endoplasmic reticulum and Golgi. As to quaternary structure, homodimer; in the endoplasmic reticulum and Golgi. Forms homodimers as well as homohexamers. NS1 may interact with NS4A. In terms of assembly, forms a heterodimer with serine protease NS3. May form homooligomers. As to quaternary structure, forms a heterodimer with NS2B. Interacts with NS4B. Interacts with unphosphorylated RNA-directed RNA polymerase NS5; this interaction stimulates RNA-directed RNA polymerase NS5 guanylyltransferase activity. Interacts with serine protease NS3. In terms of assembly, interacts with host STAT2; this interaction inhibits the phosphorylation of the latter, and, when all viral proteins are present (polyprotein), targets STAT2 for degradation. Specific enzymatic cleavages in vivo yield mature proteins. Cleavages in the lumen of endoplasmic reticulum are performed by host signal peptidase, whereas cleavages in the cytoplasmic side are performed by serine protease NS3. Signal cleavage at the 2K-4B site requires a prior NS3 protease-mediated cleavage at the 4A-2K site. Post-translationally, cleaved in post-Golgi vesicles by a host furin, releasing the mature small envelope protein M, and peptide pr. This cleavage is incomplete as up to 30% of viral particles still carry uncleaved prM. In terms of processing, N-glycosylated. N-glycosylated. The excreted form is glycosylated and this is required for efficient secretion of the protein from infected cells. Post-translationally, acetylated by host KAT5. Acetylation modulates NS3 RNA-binding and unwinding activities and plays an important positive role for viral replication. In terms of processing, phosphorylated on serines residues. This phosphorylation may trigger NS5 nuclear localization.

The protein localises to the virion. The protein resides in the host nucleus. It is found in the host cytoplasm. It localises to the host perinuclear region. Its subcellular location is the secreted. The protein localises to the virion membrane. The protein resides in the host endoplasmic reticulum membrane. It catalyses the reaction Selective hydrolysis of -Xaa-Xaa-|-Yaa- bonds in which each of the Xaa can be either Arg or Lys and Yaa can be either Ser or Ala.. It carries out the reaction RNA(n) + a ribonucleoside 5'-triphosphate = RNA(n+1) + diphosphate. The catalysed reaction is a ribonucleoside 5'-triphosphate + H2O = a ribonucleoside 5'-diphosphate + phosphate + H(+). The enzyme catalyses ATP + H2O = ADP + phosphate + H(+). It catalyses the reaction a 5'-end (5'-triphosphoguanosine)-ribonucleoside in mRNA + S-adenosyl-L-methionine = a 5'-end (N(7)-methyl 5'-triphosphoguanosine)-ribonucleoside in mRNA + S-adenosyl-L-homocysteine. It carries out the reaction a 5'-end (N(7)-methyl 5'-triphosphoguanosine)-ribonucleoside in mRNA + S-adenosyl-L-methionine = a 5'-end (N(7)-methyl 5'-triphosphoguanosine)-(2'-O-methyl-ribonucleoside) in mRNA + S-adenosyl-L-homocysteine + H(+). Its function is as follows. Plays a role in virus budding by binding to the cell membrane and gathering the viral RNA into a nucleocapsid that forms the core of a mature virus particle. During virus entry, may induce genome penetration into the host cytoplasm after hemifusion induced by the surface proteins. Can migrate to the cell nucleus where it modulates host functions. Inhibits RNA silencing by interfering with host Dicer. In terms of biological role, prevents premature fusion activity of envelope proteins in trans-Golgi by binding to envelope protein E at pH6.0. After virion release in extracellular space, gets dissociated from E dimers. Functionally, acts as a chaperone for envelope protein E during intracellular virion assembly by masking and inactivating envelope protein E fusion peptide. prM is the only viral peptide matured by host furin in the trans-Golgi network probably to avoid catastrophic activation of the viral fusion activity in acidic Golgi compartment prior to virion release. prM-E cleavage is inefficient, and many virions are only partially matured. These uncleaved prM would play a role in immune evasion. Its function is as follows. May play a role in virus budding. Exerts cytotoxic effects by activating a mitochondrial apoptotic pathway through M ectodomain. May display a viroporin activity. Binds to host cell surface receptor and mediates fusion between viral and cellular membranes. Envelope protein is synthesized in the endoplasmic reticulum in the form of heterodimer with protein prM. They play a role in virion budding in the ER, and the newly formed immature particle is covered with 60 spikes composed of heterodimer between precursor prM and envelope protein E. The virion is transported to the Golgi apparatus where the low pH causes dissociation of PrM-E heterodimers and formation of E homodimers. prM-E cleavage is inefficient, and many virions are only partially matured. These uncleaved prM would play a role in immune evasion. In terms of biological role, involved in immune evasion, pathogenesis and viral replication. Once cleaved off the polyprotein, is targeted to three destinations: the viral replication cycle, the plasma membrane and the extracellular compartment. Essential for viral replication. Required for formation of the replication complex and recruitment of other non-structural proteins to the ER-derived membrane structures. Excreted as a hexameric lipoparticle that plays a role against host immune response. Antagonizing the complement function. Binds to the host macrophages and dendritic cells. Inhibits signal transduction originating from Toll-like receptor 3 (TLR3). Functionally, component of the viral RNA replication complex that functions in virion assembly and antagonizes the host immune response. Its function is as follows. Required cofactor for the serine protease function of NS3. May have membrane-destabilizing activity and form viroporins. Displays three enzymatic activities: serine protease, NTPase and RNA helicase. NS3 serine protease, in association with NS2B, performs its autocleavage and cleaves the polyprotein at dibasic sites in the cytoplasm: C-prM, NS2A-NS2B, NS2B-NS3, NS3-NS4A, NS4A-2K and NS4B-NS5. NS3 RNA helicase binds RNA and unwinds dsRNA in the 3' to 5' direction. In terms of biological role, regulates the ATPase activity of the NS3 helicase activity. NS4A allows NS3 helicase to conserve energy during unwinding. Functionally, functions as a signal peptide for NS4B and is required for the interferon antagonism activity of the latter. Its function is as follows. Induces the formation of ER-derived membrane vesicles where the viral replication takes place. Inhibits interferon (IFN)-induced host STAT1 phosphorylation and nuclear translocation, thereby preventing the establishment of cellular antiviral state by blocking the IFN-alpha/beta pathway. Inhibits STAT2 translocation in the nucleus after IFN-alpha treatment. Replicates the viral (+) and (-) RNA genome, and performs the capping of genomes in the cytoplasm. NS5 methylates viral RNA cap at guanine N-7 and ribose 2'-O positions. Besides its role in RNA genome replication, also prevents the establishment of cellular antiviral state by blocking the interferon-alpha/beta (IFN-alpha/beta) signaling pathway. Inhibits host TYK2 and STAT2 phosphorylation, thereby preventing activation of JAK-STAT signaling pathway. The polypeptide is Genome polyprotein (Homo sapiens (Human)).